The following is a 115-amino-acid chain: Cysteine-rich venom protein 5 (115 aa).

The signal sequence occupies residues 1–22; the sequence is MSKVMIIMLVGMIFAIISTVSG. Disulfide bonds link C26–C41, C33–C44, and C40–C51. The tract at residues 54–115 is disordered; that stretch reads RIGPPINTQP…RKPTNRPRSH (62 aa). Basic residues-rich tracts occupy residues 68–77 and 86–115; these read QPTRRTRGPK and NRTR…PRSH.

In terms of tissue distribution, expressed by the venom gland.

It is found in the secreted. The polypeptide is Cysteine-rich venom protein 5 (Pimpla hypochondriaca (Parasitoid wasp)).